We begin with the raw amino-acid sequence, 460 residues long: ATP synthase subunit beta (460 aa).

148–155 is an ATP binding site; sequence GGAGVGKT.

Belongs to the ATPase alpha/beta chains family. In terms of assembly, F-type ATPases have 2 components, CF(1) - the catalytic core - and CF(0) - the membrane proton channel. CF(1) has five subunits: alpha(3), beta(3), gamma(1), delta(1), epsilon(1). CF(0) has three main subunits: a(1), b(2) and c(9-12). The alpha and beta chains form an alternating ring which encloses part of the gamma chain. CF(1) is attached to CF(0) by a central stalk formed by the gamma and epsilon chains, while a peripheral stalk is formed by the delta and b chains.

It is found in the cell inner membrane. It catalyses the reaction ATP + H2O + 4 H(+)(in) = ADP + phosphate + 5 H(+)(out). Its function is as follows. Produces ATP from ADP in the presence of a proton gradient across the membrane. The catalytic sites are hosted primarily by the beta subunits. The chain is ATP synthase subunit beta from Alcanivorax borkumensis (strain ATCC 700651 / DSM 11573 / NCIMB 13689 / SK2).